We begin with the raw amino-acid sequence, 175 residues long: Protein MAL2 (175 aa).

At 1–33 the chain is on the cytoplasmic side; that stretch reads MSAGGAVPPPPNPAVSFPAPRVTLPAGPDILRT. The region spanning 30-174 is the MARVEL domain; it reads ILRTYSGAFV…SLGLALRRWR (145 aa). Residues 34-54 traverse the membrane as a helical segment; the sequence is YSGAFVCLEIVLGGLVWILVA. Topologically, residues 55–65 are lumenal; it reads SSNVPLPLLQG. Residues 66 to 86 traverse the membrane as a helical segment; sequence WVMFVSVTAFFFSLLFLGLFL. Residues 87–101 lie on the Cytoplasmic side of the membrane; that stretch reads SGMVTQIDANWNFLD. The helical transmembrane segment at 102 to 122 threads the bilayer; the sequence is FVYHFIVFVFYFGAFLLEAAA. Over 123-148 the chain is Lumenal; that stretch reads TSLHDLQCNTTMTVKPLLNDNQYNIN. N-linked (GlcNAc...) asparagine glycosylation is present at N131. A helical transmembrane segment spans residues 149–169; it reads VAATVFAFMTTACYGCSLGLA. The Cytoplasmic portion of the chain corresponds to 170–175; sequence LRRWRP.

This sequence belongs to the MAL family. As to quaternary structure, interacts with TPD52L2.

It localises to the cell membrane. It is found in the apical cell membrane. Functionally, member of the machinery of polarized transport. Required for the indirect transcytotic route at the step of the egress of the transcytosing cargo from perinuclear endosomes in order for it to travel to the apical surface via a raft-dependent pathway. This chain is Protein MAL2 (Mal2), found in Mus musculus (Mouse).